The sequence spans 885 residues: Alanine--tRNA ligase (885 aa).

Zn(2+) is bound by residues histidine 569, histidine 573, cysteine 672, and histidine 676.

The protein belongs to the class-II aminoacyl-tRNA synthetase family. It depends on Zn(2+) as a cofactor.

The protein localises to the cytoplasm. The catalysed reaction is tRNA(Ala) + L-alanine + ATP = L-alanyl-tRNA(Ala) + AMP + diphosphate. Functionally, catalyzes the attachment of alanine to tRNA(Ala) in a two-step reaction: alanine is first activated by ATP to form Ala-AMP and then transferred to the acceptor end of tRNA(Ala). Also edits incorrectly charged Ser-tRNA(Ala) and Gly-tRNA(Ala) via its editing domain. The protein is Alanine--tRNA ligase of Chlorobaculum tepidum (strain ATCC 49652 / DSM 12025 / NBRC 103806 / TLS) (Chlorobium tepidum).